Consider the following 406-residue polypeptide: Putative permease Rv2963 (406 aa).

A run of 9 helical transmembrane segments spans residues 30-50 (WEIL…QAVV), 67-87 (LVIA…AVAL), 111-131 (LVVE…TAAE), 132-152 (FVGG…FVGA), 208-228 (LAIL…AAWV), 246-266 (AVWG…CSIG), 278-298 (GISF…LPIL), 312-332 (VLLG…ELLF), and 361-381 (VIFL…GGLP).

The protein belongs to the UPF0718 family.

The protein resides in the cell membrane. The protein is Putative permease Rv2963 of Mycobacterium tuberculosis (strain ATCC 25618 / H37Rv).